The primary structure comprises 182 residues: MQLNIPTWLTLFRVVLIPFFVLAFYLPFVWAPMVCAIIFVFAAATDWFDGFLARRWKQTTRFGAFLDPVADKVMVAIALVLVAEHYHVWWITLPAATMIAREIIISSLREWMAEIGKRSSVAVSWIGKVKTTAQMGSLVGLLWRPDHNIELASFVLLYIAAVLTFWSMFQYLNAAWKDLLEP.

Topologically, residues Met1–Phe12 are cytoplasmic. Residues Arg13–Ile37 traverse the membrane as a helical segment. Over Ile38 to Thr60 the chain is Periplasmic. A helical membrane pass occupies residues Arg61–Leu81. Over Val82–Tyr86 the chain is Cytoplasmic. A helical transmembrane segment spans residues His87 to Ser107. The Periplasmic portion of the chain corresponds to Leu108–Pro145. Residues Asp146–Met168 traverse the membrane as a helical segment. The Cytoplasmic segment spans residues Phe169 to Glu181.

Belongs to the CDP-alcohol phosphatidyltransferase class-I family.

The protein localises to the cell inner membrane. The enzyme catalyses a CDP-1,2-diacyl-sn-glycerol + sn-glycerol 3-phosphate = a 1,2-diacyl-sn-glycero-3-phospho-(1'-sn-glycero-3'-phosphate) + CMP + H(+). It participates in phospholipid metabolism; phosphatidylglycerol biosynthesis; phosphatidylglycerol from CDP-diacylglycerol: step 1/2. Functionally, catalyzes the conversion of cytidine diphosphate diacylglycerol (CDP-DG) and glycerol 3-phosphate into phosphatidylglycerol. Essential for the synthesis of anionic phospholipids, thereby playing a role in balancing the ratio of zwitterionic and anionic phospholipids, which is thought to be important for normal membrane function. This chain is CDP-diacylglycerol--glycerol-3-phosphate 3-phosphatidyltransferase, found in Yersinia enterocolitica serotype O:8 / biotype 1B (strain NCTC 13174 / 8081).